The following is a 193-amino-acid chain: Imidazoleglycerol-phosphate dehydratase (193 aa).

It belongs to the imidazoleglycerol-phosphate dehydratase family.

The protein localises to the cytoplasm. The catalysed reaction is D-erythro-1-(imidazol-4-yl)glycerol 3-phosphate = 3-(imidazol-4-yl)-2-oxopropyl phosphate + H2O. It functions in the pathway amino-acid biosynthesis; L-histidine biosynthesis; L-histidine from 5-phospho-alpha-D-ribose 1-diphosphate: step 6/9. This Saccharolobus islandicus (strain M.14.25 / Kamchatka #1) (Sulfolobus islandicus) protein is Imidazoleglycerol-phosphate dehydratase.